We begin with the raw amino-acid sequence, 355 residues long: DNA polymerase IV (355 aa).

Residues 6–187 (IIHVDMDAFY…LPVGKIHGVG (182 aa)) enclose the UmuC domain. Mg(2+)-binding residues include Asp10 and Asp105. Glu106 is a catalytic residue.

This sequence belongs to the DNA polymerase type-Y family. Monomer. The cofactor is Mg(2+).

The protein localises to the cytoplasm. It catalyses the reaction DNA(n) + a 2'-deoxyribonucleoside 5'-triphosphate = DNA(n+1) + diphosphate. In terms of biological role, poorly processive, error-prone DNA polymerase involved in untargeted mutagenesis. Copies undamaged DNA at stalled replication forks, which arise in vivo from mismatched or misaligned primer ends. These misaligned primers can be extended by PolIV. Exhibits no 3'-5' exonuclease (proofreading) activity. May be involved in translesional synthesis, in conjunction with the beta clamp from PolIII. This chain is DNA polymerase IV, found in Alkalilimnicola ehrlichii (strain ATCC BAA-1101 / DSM 17681 / MLHE-1).